The chain runs to 63 residues: Large ribosomal subunit protein uL29 (63 aa).

This sequence belongs to the universal ribosomal protein uL29 family.

In Edwardsiella ictaluri (strain 93-146), this protein is Large ribosomal subunit protein uL29.